A 377-amino-acid polypeptide reads, in one-letter code: Chaperone protein DnaJ (377 aa).

Residues 5-70 form the J domain; it reads DYYQILGIPK…EKRSAYDQYG (66 aa). The CR-type zinc finger occupies 132–210; it reads GIKKEIQIPT…CHGQGRVETY (79 aa). Cys145, Cys148, Cys162, Cys165, Cys184, Cys187, Cys198, and Cys201 together coordinate Zn(2+). CXXCXGXG motif repeat units lie at residues 145-152, 162-169, 184-191, and 198-205; these read CKTCYGSG, CSTCHGKG, CPTCHGKG, and CNLCHGQG.

The protein belongs to the DnaJ family. Homodimer. It depends on Zn(2+) as a cofactor.

It is found in the cytoplasm. Its function is as follows. Participates actively in the response to hyperosmotic and heat shock by preventing the aggregation of stress-denatured proteins and by disaggregating proteins, also in an autonomous, DnaK-independent fashion. Unfolded proteins bind initially to DnaJ; upon interaction with the DnaJ-bound protein, DnaK hydrolyzes its bound ATP, resulting in the formation of a stable complex. GrpE releases ADP from DnaK; ATP binding to DnaK triggers the release of the substrate protein, thus completing the reaction cycle. Several rounds of ATP-dependent interactions between DnaJ, DnaK and GrpE are required for fully efficient folding. Also involved, together with DnaK and GrpE, in the DNA replication of plasmids through activation of initiation proteins. This is Chaperone protein DnaJ from Buchnera aphidicola subsp. Acyrthosiphon pisum (strain 5A).